The primary structure comprises 314 residues: Hydroxyacyl-coenzyme A dehydrogenase, mitochondrial (314 aa).

Residues 1–12 (MAFVTRQFLRSM) constitute a mitochondrion transit peptide. NAD(+) contacts are provided by residues 34–39 (GGGLMG) and aspartate 57. Serine 73 contributes to the CoA binding site. At lysine 75 the chain carries N6-acetyllysine. Lysine 80 contacts CoA. Lysine 80 carries the N6-succinyllysine modification. 2 positions are modified to N6-acetyllysine; alternate: lysine 81 and lysine 87. N6-succinyllysine; alternate is present on residues lysine 81 and lysine 87. Position 122 (glutamate 122) interacts with NAD(+). Lysine 125 carries the N6-acetyllysine modification. Lysine 127 is an NAD(+) binding site. Lysine 127 is subject to N6-(2-hydroxyisobutyryl)lysine. Lysine 136 is modified (N6-acetyllysine; alternate). The residue at position 136 (lysine 136) is an N6-succinyllysine; alternate. Serine 149 and asparagine 173 together coordinate NAD(+). Serine 149 is a CoA binding site. Lysine 179 carries the N6-acetyllysine modification. An N6-acetyllysine; alternate mark is found at lysine 185, lysine 192, and lysine 202. N6-succinyllysine; alternate occurs at positions 185, 192, and 202. An N6-succinyllysine modification is found at lysine 206. Lysine 212 and lysine 241 each carry N6-acetyllysine; alternate. Residues lysine 212 and lysine 241 each carry the N6-succinyllysine; alternate modification. Lysine 305 is a binding site for NAD(+). An N6-acetyllysine; alternate modification is found at lysine 312. N6-succinyllysine; alternate is present on lysine 312.

The protein belongs to the 3-hydroxyacyl-CoA dehydrogenase family. As to quaternary structure, homodimer. Interacts with GLUD1; this interaction inhibits the activation of glutamate dehydrogenase 1 (GLUD1). Post-translationally, succinylation at Lys-81, adjacent to a coenzyme A binding site. Desuccinylated by SIRT5. As to expression, expressed in liver, kidney, brain, and pancreatic islets.

It is found in the mitochondrion matrix. Its subcellular location is the nucleus. The protein resides in the cytoplasm. The protein localises to the cytosol. The enzyme catalyses a (3S)-3-hydroxyacyl-CoA + NAD(+) = a 3-oxoacyl-CoA + NADH + H(+). It carries out the reaction (3S)-3-hydroxybutanoyl-CoA + NAD(+) = acetoacetyl-CoA + NADH + H(+). The catalysed reaction is (3S)-hydroxydecanoyl-CoA + NAD(+) = 3-oxodecanoyl-CoA + NADH + H(+). It catalyses the reaction (3S)-hydroxyhexadecanoyl-CoA + NAD(+) = 3-oxohexadecanoyl-CoA + NADH + H(+). The protein operates within lipid metabolism; fatty acid beta-oxidation. Mitochondrial fatty acid beta-oxidation enzyme that catalyzes the third step of the beta-oxidation cycle for medium and short-chain 3-hydroxy fatty acyl-CoAs (C4 to C10). Plays a role in the control of insulin secretion by inhibiting the activation of glutamate dehydrogenase 1 (GLUD1), an enzyme that has an important role in regulating amino acid-induced insulin secretion. Plays a role in the maintenance of normal spermatogenesis through the reduction of fatty acid accumulation in the testes. Its function is as follows. Inhibits cell proliferation. The polypeptide is Hydroxyacyl-coenzyme A dehydrogenase, mitochondrial (Hadh) (Mus musculus (Mouse)).